The sequence spans 319 residues: Aspartate carbamoyltransferase catalytic subunit (319 aa).

Carbamoyl phosphate is bound by residues arginine 59 and threonine 60. An L-aspartate-binding site is contributed by lysine 87. Arginine 109, histidine 137, and glutamine 140 together coordinate carbamoyl phosphate. L-aspartate contacts are provided by arginine 170 and arginine 224. 2 residues coordinate carbamoyl phosphate: glycine 265 and proline 266.

It belongs to the aspartate/ornithine carbamoyltransferase superfamily. ATCase family. In terms of assembly, heterododecamer (2C3:3R2) of six catalytic PyrB chains organized as two trimers (C3), and six regulatory PyrI chains organized as three dimers (R2).

The enzyme catalyses carbamoyl phosphate + L-aspartate = N-carbamoyl-L-aspartate + phosphate + H(+). The protein operates within pyrimidine metabolism; UMP biosynthesis via de novo pathway; (S)-dihydroorotate from bicarbonate: step 2/3. Its function is as follows. Catalyzes the condensation of carbamoyl phosphate and aspartate to form carbamoyl aspartate and inorganic phosphate, the committed step in the de novo pyrimidine nucleotide biosynthesis pathway. The chain is Aspartate carbamoyltransferase catalytic subunit from Gemmatimonas aurantiaca (strain DSM 14586 / JCM 11422 / NBRC 100505 / T-27).